The sequence spans 110 residues: V-type proton ATPase subunit F (110 aa).

This sequence belongs to the V-ATPase F subunit family. As to quaternary structure, V-ATPase is a heteromultimeric enzyme made up of two complexes: the ATP-hydrolytic V1 complex and the proton translocation V0 complex. The V1 complex consists of three catalytic AB heterodimers that form a heterohexamer, three peripheral stalks each consisting of EG heterodimers, one central rotor including subunits D and F, and the regulatory subunits C and H. The proton translocation complex V0 consists of the proton transport subunit a, a ring of proteolipid subunits c9c'', rotary subunit d, subunits e and f, and two accessory subunits.

In terms of biological role, subunit of the V1 complex of vacuolar(H+)-ATPase (V-ATPase), a multisubunit enzyme composed of a peripheral complex (V1) that hydrolyzes ATP and a membrane integral complex (V0) that translocates protons. V-ATPase is responsible for acidifying and maintaining the pH of intracellular compartments and in some cell types, is targeted to the plasma membrane, where it is responsible for acidifying the extracellular environment. In Xenopus laevis (African clawed frog), this protein is V-type proton ATPase subunit F (atp6s14).